Here is a 433-residue protein sequence, read N- to C-terminus: Histidinol dehydrogenase 2 (433 aa).

Residues tyrosine 130, glutamine 192, and asparagine 215 each contribute to the NAD(+) site. Substrate is bound by residues serine 238, glutamine 260, and histidine 263. Zn(2+)-binding residues include glutamine 260 and histidine 263. Residues glutamate 328 and histidine 329 each act as proton acceptor in the active site. Positions 329, 362, 416, and 421 each coordinate substrate. Aspartate 362 lines the Zn(2+) pocket. Histidine 421 is a Zn(2+) binding site.

This sequence belongs to the histidinol dehydrogenase family. Zn(2+) serves as cofactor.

It carries out the reaction L-histidinol + 2 NAD(+) + H2O = L-histidine + 2 NADH + 3 H(+). The protein operates within amino-acid biosynthesis; L-histidine biosynthesis; L-histidine from 5-phospho-alpha-D-ribose 1-diphosphate: step 9/9. Functionally, catalyzes the sequential NAD-dependent oxidations of L-histidinol to L-histidinaldehyde and then to L-histidine. This Trichormus variabilis (strain ATCC 29413 / PCC 7937) (Anabaena variabilis) protein is Histidinol dehydrogenase 2.